We begin with the raw amino-acid sequence, 238 residues long: Orotidine 5'-phosphate decarboxylase (238 aa).

Substrate contacts are provided by residues D18, K40, 67 to 76 (DMKLLDIDNT), T122, R183, Q192, and R213. The Proton donor role is filled by K69.

This sequence belongs to the OMP decarboxylase family. Type 1 subfamily. Homodimer.

It carries out the reaction orotidine 5'-phosphate + H(+) = UMP + CO2. It participates in pyrimidine metabolism; UMP biosynthesis via de novo pathway; UMP from orotate: step 2/2. Its function is as follows. Catalyzes the decarboxylation of orotidine 5'-monophosphate (OMP) to uridine 5'-monophosphate (UMP). This chain is Orotidine 5'-phosphate decarboxylase, found in Brucella melitensis biotype 2 (strain ATCC 23457).